The chain runs to 206 residues: Large ribosomal subunit protein uL13 (206 aa).

The protein belongs to the universal ribosomal protein uL13 family.

The protein is Large ribosomal subunit protein uL13 (RPL13A) of Picea mariana (Black spruce).